The following is a 159-amino-acid chain: uncharacterized protein (159 aa).

The N-acetyltransferase domain occupies 4 to 153 (IKTDDLTHPA…HSRFLSLTLC (150 aa)).

It belongs to the acetyltransferase family.

This is an uncharacterized protein from Escherichia coli (strain K12).